Reading from the N-terminus, the 211-residue chain is Protein-methionine-sulfoxide reductase heme-binding subunit MsrQ (211 aa).

4 helical membrane passes run 10–30, 82–102, 116–136, and 153–173; these read WLKV…VWAI, LWCF…ELGV, PYLT…FTST, and FVYL…KIIS.

Belongs to the MsrQ family. As to quaternary structure, heterodimer of a catalytic subunit (MsrP) and a heme-binding subunit (MsrQ). Requires FMN as cofactor. It depends on heme b as a cofactor.

The protein resides in the cell inner membrane. Its function is as follows. Part of the MsrPQ system that repairs oxidized periplasmic proteins containing methionine sulfoxide residues (Met-O), using respiratory chain electrons. Thus protects these proteins from oxidative-stress damage caused by reactive species of oxygen and chlorine generated by the host defense mechanisms. MsrPQ is essential for the maintenance of envelope integrity under bleach stress, rescuing a wide series of structurally unrelated periplasmic proteins from methionine oxidation, including the primary periplasmic chaperone SurA and the lipoprotein Pal. MsrQ provides electrons for reduction to the reductase catalytic subunit MsrP, using the quinone pool of the respiratory chain. The sequence is that of Protein-methionine-sulfoxide reductase heme-binding subunit MsrQ from Shigella dysenteriae serotype 1 (strain Sd197).